The sequence spans 250 residues: Probable transcriptional regulatory protein ROP_68700 (250 aa).

Belongs to the TACO1 family.

The protein localises to the cytoplasm. This chain is Probable transcriptional regulatory protein ROP_68700, found in Rhodococcus opacus (strain B4).